A 361-amino-acid polypeptide reads, in one-letter code: DNA-(apurinic or apyrimidinic site) endonuclease (361 aa).

A disordered region spans residues 1–90 (MTSRTKKLKM…TNKTTASVSI (90 aa)). A compositionally biased stretch (acidic residues) spans 25 to 39 (TSEEEKEEVEEEEEE). A Nuclear localization signal motif is present at residues 41-44 (KKRK). Basic residues predominate over residues 43–64 (RKLVKKTPAKKAPAKKAAAKKK). The span at 68–80 (EDEDEEEKEEEEE) shows a compositional bias: acidic residues. Glu-139 provides a ligand contact to Mg(2+). The active site involves Tyr-211. Mg(2+) is bound by residues Asp-252, Asn-254, and Asp-350. Asp-252 (proton donor/acceptor) is an active-site residue.

The protein belongs to the DNA repair enzymes AP/ExoA family. The cofactor is Mg(2+). Mn(2+) serves as cofactor.

The protein localises to the nucleus. The protein is DNA-(apurinic or apyrimidinic site) endonuclease (apeA) of Dictyostelium discoideum (Social amoeba).